The sequence spans 215 residues: Thiamine-phosphate synthase (215 aa).

Residues 37–41 (QLRIK) and Asn-69 each bind 4-amino-2-methyl-5-(diphosphooxymethyl)pyrimidine. Mg(2+) contacts are provided by Asp-70 and Asp-89. A 4-amino-2-methyl-5-(diphosphooxymethyl)pyrimidine-binding site is contributed by Ser-108. 134–136 (TQT) contacts 2-[(2R,5Z)-2-carboxy-4-methylthiazol-5(2H)-ylidene]ethyl phosphate. Lys-137 contacts 4-amino-2-methyl-5-(diphosphooxymethyl)pyrimidine. Residues Gly-166 and 186–187 (VS) contribute to the 2-[(2R,5Z)-2-carboxy-4-methylthiazol-5(2H)-ylidene]ethyl phosphate site.

This sequence belongs to the thiamine-phosphate synthase family. The cofactor is Mg(2+).

The enzyme catalyses 2-[(2R,5Z)-2-carboxy-4-methylthiazol-5(2H)-ylidene]ethyl phosphate + 4-amino-2-methyl-5-(diphosphooxymethyl)pyrimidine + 2 H(+) = thiamine phosphate + CO2 + diphosphate. The catalysed reaction is 2-(2-carboxy-4-methylthiazol-5-yl)ethyl phosphate + 4-amino-2-methyl-5-(diphosphooxymethyl)pyrimidine + 2 H(+) = thiamine phosphate + CO2 + diphosphate. It catalyses the reaction 4-methyl-5-(2-phosphooxyethyl)-thiazole + 4-amino-2-methyl-5-(diphosphooxymethyl)pyrimidine + H(+) = thiamine phosphate + diphosphate. It functions in the pathway cofactor biosynthesis; thiamine diphosphate biosynthesis; thiamine phosphate from 4-amino-2-methyl-5-diphosphomethylpyrimidine and 4-methyl-5-(2-phosphoethyl)-thiazole: step 1/1. Condenses 4-methyl-5-(beta-hydroxyethyl)thiazole monophosphate (THZ-P) and 2-methyl-4-amino-5-hydroxymethyl pyrimidine pyrophosphate (HMP-PP) to form thiamine monophosphate (TMP). The protein is Thiamine-phosphate synthase of Yersinia pestis (strain Pestoides F).